Reading from the N-terminus, the 105-residue chain is Pyrimidine/purine nucleoside phosphorylase (105 aa).

Belongs to the nucleoside phosphorylase PpnP family.

The catalysed reaction is a purine D-ribonucleoside + phosphate = a purine nucleobase + alpha-D-ribose 1-phosphate. The enzyme catalyses adenosine + phosphate = alpha-D-ribose 1-phosphate + adenine. It catalyses the reaction cytidine + phosphate = cytosine + alpha-D-ribose 1-phosphate. It carries out the reaction guanosine + phosphate = alpha-D-ribose 1-phosphate + guanine. The catalysed reaction is inosine + phosphate = alpha-D-ribose 1-phosphate + hypoxanthine. The enzyme catalyses thymidine + phosphate = 2-deoxy-alpha-D-ribose 1-phosphate + thymine. It catalyses the reaction uridine + phosphate = alpha-D-ribose 1-phosphate + uracil. It carries out the reaction xanthosine + phosphate = alpha-D-ribose 1-phosphate + xanthine. Catalyzes the phosphorolysis of diverse nucleosides, yielding D-ribose 1-phosphate and the respective free bases. Can use uridine, adenosine, guanosine, cytidine, thymidine, inosine and xanthosine as substrates. Also catalyzes the reverse reactions. The chain is Pyrimidine/purine nucleoside phosphorylase from Acidovorax ebreus (strain TPSY) (Diaphorobacter sp. (strain TPSY)).